The primary structure comprises 2625 residues: Highly reducing polyketide synthase frbB (2625 aa).

The segment covering 1-10 (MRNIDEHMSE) has biased composition (basic and acidic residues). Positions 1–25 (MRNIDEHMSERATLQSSGGYGERDS) are disordered. Residues 27–449 (VEPIAIIGMS…GTNAHVILDR (423 aa)) enclose the Ketosynthase family 3 (KS3) domain. Residues Cys-200, His-334, and His-375 each act as for beta-ketoacyl synthase activity in the active site. The segment at 563-883 (YVFSGQGAQY…DAASTLLTTI (321 aa)) is malonyl-CoA:ACP transacylase (MAT) domain. Positions 942-1080 (HELLGNMSTD…GRIRAVLDDS (139 aa)) are N-terminal hotdog fold. The interval 942–1252 (HELLGNMSTD…GMILAKLPGG (311 aa)) is dehydratase (DH) domain. In terms of domain architecture, PKS/mFAS DH spans 942 to 1255 (HELLGNMSTD…LAKLPGGTSR (314 aa)). The active-site Proton acceptor; for dehydratase activity is the His-974. A C-terminal hotdog fold region spans residues 1102-1255 (VRFVSPSAFY…LAKLPGGTSR (154 aa)). Catalysis depends on Asp-1167, which acts as the Proton donor; for dehydratase activity. The methyltransferase (CMet) domain stretch occupies residues 1490–1673 (YHQIKAYIAE…GFVDTEPVFR (184 aa)). Positions 1907-2220 (GLLETFHWKP…SGKHIGKVIL (314 aa)) are enoyl reductase (ER) domain. Residues 2261-2439 (AVYIVVGGLG…GYSINIGPVS (179 aa)) are ketoreductase (KR) domain. The region spanning 2542–2619 (GAEAAVLTAI…HLARLAAEES (78 aa)) is the Carrier domain. Ser-2579 carries the O-(pantetheine 4'-phosphoryl)serine modification.

Its pathway is antifungal biosynthesis. In terms of biological role, highly reducing polyketide synthase; part of the gene cluster that mediates the biosynthesis of the antifungal antibiotic FR901469, an inhibitor of beta-1,3-glucansynthase, exerting antifungal activity against the pathogenes Candida albicans and Aspergillus fumigatus. FR901469 is a cyclic depsipeptide containing 12 amino acid residues and a fatty acid chain. The NRPS frbI contains 12 modules responsible for the formation of the depsipeptide backbone which is denoted as Acyl-Thr-Ala-Tyr-Val-4OHPro-Thr-Thr-3OHPro-threo3OHGln-Gly-Thr-Orn-OH (C71H116N14O23). The PKS frbB is probably involved in the production of the hydrocarbon chain, and the acyl-CoA ligase frbC might be involved in the transport of the chain to the peptide ptoduct of frbI. Because FR901469 contains 3 hydroxylated amino acid residues, the 3 oxygenases frbA, frbH, and frbJ might be participating in amino acid hydroxylation. As no thioesterase domains were detected in frbI or frbB, the thioesterases frbD and frbE may instead release and cyclize the products of the NRPS and PKS, respectively. In Dothideomycetidae sp. (strain 11243) (Fungal sp. (strain No.11243)), this protein is Highly reducing polyketide synthase frbB.